A 407-amino-acid chain; its full sequence is Protein arginine N-methyltransferase 2 (407 aa).

Residues 186–407 form the RMT2 domain; it reads TAADQATYLK…YYYHPEIRFA (222 aa). S-adenosyl-L-methionine-binding positions include tyrosine 193, methionine 223, 246 to 251, 267 to 269, 294 to 295, and aspartate 315; these read FGMGII, EAH, and WQ.

It belongs to the class I-like SAM-binding methyltransferase superfamily. RMT2 methyltransferase family. As to quaternary structure, monomer.

It is found in the cytoplasm. The protein localises to the nucleus. S-adenosyl-L-methionine-dependent protein-arginine N-methyltransferase that methylates the delta-nitrogen atom of arginine residues to form N5-methylarginine (type IV) in target proteins. Monomethylates ribosomal protein L12. This chain is Protein arginine N-methyltransferase 2, found in Kluyveromyces lactis (strain ATCC 8585 / CBS 2359 / DSM 70799 / NBRC 1267 / NRRL Y-1140 / WM37) (Yeast).